The sequence spans 341 residues: Peptidoglycan recognition protein 3 (341 aa).

Residues 1-17 (MGTLPWLLAFFILGLQA) form the signal peptide. 2 N-acetylmuramoyl-L-alanine amidase domains span residues 77 to 179 (TIGW…KVCP) and 200 to 325 (PAKY…ILSP). Residue Asn-113 is glycosylated (N-linked (GlcNAc...) asparagine). Disulfide bonds link Cys-178–Cys-300, Cys-194–Cys-238, and Cys-214–Cys-220. Peptidoglycan contacts are provided by His-231, Arg-235, and Tyr-242. The segment at 264–269 (HTYGFN) is interaction with murein.

It belongs to the N-acetylmuramoyl-L-alanine amidase 2 family. In terms of assembly, monomer. Homodimer; disulfide-linked. Heterodimer with PGLYRP4; disulfide-linked. Post-translationally, N-glycosylated. In terms of tissue distribution, detected in skin epidermis, eccrine sweat glands and ducts, ciliary body epithelial cells of the eye, in small intestine, colon, stomach and in mature epithelial cells of the tongue (at protein level). Highly expressed in skin and esophagus, expressed also in tonsils and thymus and to a much lesser extent in the stomach, descending colon, rectum and brain.

It localises to the secreted. Functionally, pattern receptor that binds to murein peptidoglycans (PGN) of Gram-positive bacteria. Has bactericidal activity towards Gram-positive bacteria. May kill Gram-positive bacteria by interfering with peptidoglycan biosynthesis. Also binds to Gram-negative bacteria, and has bacteriostatic activity towards Gram-negative bacteria. Plays a role in innate immunity. The sequence is that of Peptidoglycan recognition protein 3 (PGLYRP3) from Homo sapiens (Human).